We begin with the raw amino-acid sequence, 113 residues long: U11-theraphotoxin-Hhn1a (113 aa).

Positions 1-21 (MNTVRVTFLLVFVLAVSLGQA) are cleaved as a signal peptide. Positions 22–74 (DKDENRMEMQEKTEQGKSYLDFAENLLLQKLEELVAKLLEEDSEESRNSRQKR) are excised as a propeptide. 3 cysteine pairs are disulfide-bonded: cysteine 75–cysteine 90, cysteine 82–cysteine 95, and cysteine 89–cysteine 110.

It belongs to the neurotoxin 14 (magi-1) family. 01 (HNTX-16) subfamily. Expressed by the venom gland.

The protein localises to the secreted. Its function is as follows. Probable ion channel inhibitor. The polypeptide is U11-theraphotoxin-Hhn1a (Cyriopagopus hainanus (Chinese bird spider)).